The sequence spans 406 residues: Zinc finger protein 57 (406 aa).

The region spanning 17–88 (VRYEDVAVSF…TCTGVFKGGP (72 aa)) is the KRAB domain. Residues 57–77 (ESKKKPQEPNPNLKDKDDDKS) are disordered. A C2H2-type 1; degenerate zinc finger spans residues 90–113 (FFCLTCGKCFKKNTFLFNHQFPVR). 2 C2H2-type zinc fingers span residues 140–162 (FFCN…RRAH) and 168–190 (RSCP…LKVH). The segment at 194–226 (KPVAGSHVKVHQNKPVASNQKQKGRVPPTTRES) is disordered. The C2H2-type 4 zinc-finger motif lies at 270–292 (VYCPYCRITFTMRTCLLNHLKIH). A C2H2-type 5; degenerate zinc finger spans residues 318-337 (YNCPVCDSSFRGKESLLNHL). Residues 372–406 (SRKRRRKRISSDSSETEGPSGSDEVMEVDTDSDLS) form a disordered region. Over residues 395–406 (EVMEVDTDSDLS) the composition is skewed to acidic residues.

This sequence belongs to the krueppel C2H2-type zinc-finger protein family. As to expression, expressed in oligodendrocytes and at lower levels in astrocytes.

The protein resides in the nucleus. Functionally, transcription regulator required to maintain maternal and paternal gene imprinting, a process by which gene expression is restricted in a parent of origin-specific manner by epigenetic modification of genomic DNA and chromatin, including DNA methylation. Acts by controlling DNA methylation during the earliest multicellular stages of development at multiple imprinting control regions (ICRs). Acts together with ZNF445. Required for the establishment of maternal methylation imprints at SNRPN locus. Acts as a transcriptional repressor in Schwann cells. Binds to a 5'-TGCCGC-3' consensus sequence and recognizes the methylated CpG within this element. The protein is Zinc finger protein 57 (Zfp57) of Rattus norvegicus (Rat).